The sequence spans 242 residues: E3 ubiquitin-protein ligase ZNRF2 (242 aa).

Positions 1-141 (MGAKQSGPAA…VGGSPGGPRL (141 aa)) are disordered. Residue Gly2 is the site of N-myristoyl glycine attachment. 3 positions are modified to phosphoserine: Ser19, Ser21, and Ser25. Positions 19–29 (SGSDLPSSSSG) are enriched in low complexity. Positions 30–41 (GANGTAGGGGGA) are enriched in gly residues. Over residues 59-97 (PSASGGAAAAAAAPAAPAAPRSRSLGGAVGSVASGARAA) the composition is skewed to low complexity. 5 positions are modified to phosphoserine: Ser82, Ser89, Ser113, Ser116, and Ser135. Residues 99–118 (SPFSIPNSSSGPYGSQDSVH) are compositionally biased toward polar residues. At Ser145 the chain carries Phosphoserine; by MTOR. A phosphoserine mark is found at Ser151 and Ser193. The segment at 199-240 (CAICLEELQQGDTIARLPCLCIYHKGCIDEWFEVNRSCPEHP) adopts an RING-type; atypical zinc-finger fold.

As to quaternary structure, interacts with UBE2N. Interacts with ZNRF1. Interacts (when phosphorylated) with YWHAE. Phosphorylated; leading to binding to YWHAE. Phosphorylated by MTOR at Ser-145 and dephosphorylated by PP6C. Ser-145 phosphorylation stimulates vesicle-to-cytosol translocation. Highly expressed in the brain, with higher expression during development than in adult. Expressed also in mammary glands, testis, colon and kidney.

Its subcellular location is the endosome membrane. It is found in the lysosome membrane. The protein localises to the presynaptic cell membrane. The protein resides in the cytoplasm. The catalysed reaction is S-ubiquitinyl-[E2 ubiquitin-conjugating enzyme]-L-cysteine + [acceptor protein]-L-lysine = [E2 ubiquitin-conjugating enzyme]-L-cysteine + N(6)-ubiquitinyl-[acceptor protein]-L-lysine.. It functions in the pathway protein modification; protein ubiquitination. In terms of biological role, E3 ubiquitin-protein ligase that plays a role in the establishment and maintenance of neuronal transmission and plasticity. Ubiquitinates the Na(+)/K(+) ATPase alpha-1 subunit/ATP1A1 and thereby influences its endocytosis and/or degradation. Acts also as a positive regulator of mTORC1 activation by amino acids, which functions upstream of the V-ATPase and of Rag-GTPases. In turn, phosphorylation by mTOR leads to its inhibition via targeting to the cytosol allowing a self-regulating feedback mechanism. The sequence is that of E3 ubiquitin-protein ligase ZNRF2 (ZNRF2) from Homo sapiens (Human).